A 95-amino-acid chain; its full sequence is MAFKPLHDRVLVRRVQSDEKTKGGLIIPDTAKEKPAEGEVVACGEGARKDSGELIAMSVKAGDRVLFGKWSGTEVTIDGAELLIMKESDILGILS.

The protein belongs to the GroES chaperonin family. In terms of assembly, heptamer of 7 subunits arranged in a ring. Interacts with the chaperonin GroEL.

It is found in the cytoplasm. In terms of biological role, together with the chaperonin GroEL, plays an essential role in assisting protein folding. The GroEL-GroES system forms a nano-cage that allows encapsulation of the non-native substrate proteins and provides a physical environment optimized to promote and accelerate protein folding. GroES binds to the apical surface of the GroEL ring, thereby capping the opening of the GroEL channel. The chain is Co-chaperonin GroES from Cereibacter sphaeroides (strain ATCC 17025 / ATH 2.4.3) (Rhodobacter sphaeroides).